We begin with the raw amino-acid sequence, 352 residues long: tRNA N6-adenosine threonylcarbamoyltransferase (352 aa).

Residues His109 and His113 each contribute to the Fe cation site. Substrate-binding positions include Thr136–Gly140, Asp169, Gly182, Asp186, and Asn284. Position 312 (Asp312) interacts with Fe cation.

Belongs to the KAE1 / TsaD family. Requires Fe(2+) as cofactor.

Its subcellular location is the cytoplasm. The enzyme catalyses L-threonylcarbamoyladenylate + adenosine(37) in tRNA = N(6)-L-threonylcarbamoyladenosine(37) in tRNA + AMP + H(+). Functionally, required for the formation of a threonylcarbamoyl group on adenosine at position 37 (t(6)A37) in tRNAs that read codons beginning with adenine. Is involved in the transfer of the threonylcarbamoyl moiety of threonylcarbamoyl-AMP (TC-AMP) to the N6 group of A37, together with TsaE and TsaB. TsaD likely plays a direct catalytic role in this reaction. The sequence is that of tRNA N6-adenosine threonylcarbamoyltransferase from Chloroherpeton thalassium (strain ATCC 35110 / GB-78).